The sequence spans 1280 residues: E3 ubiquitin-protein ligase RKP (1280 aa).

One can recognise a B30.2/SPRY domain in the interval 82 to 269; that stretch reads KLHGDLDVSV…CELNFGAYPF (188 aa). Residues 551–571 form a helical membrane-spanning segment; the sequence is SVLVSLFSVILHFLSEGFAML. Residues 669–719 are disordered; that stretch reads DRGKNTAQSSRGRCSSIPERSSHVAAECSAGSFSEEIDDKPSTSNQSDPDF. A helical membrane pass occupies residues 834–854; the sequence is ALCMWVVQLLLVLSKMDSVFV. The RING-type zinc-finger motif lies at 1217 to 1252; it reads CCICYAGEANAMIAPCSHRSCYGCITRHLLNCQRCF.

Its subcellular location is the membrane. The catalysed reaction is S-ubiquitinyl-[E2 ubiquitin-conjugating enzyme]-L-cysteine + [acceptor protein]-L-lysine = [E2 ubiquitin-conjugating enzyme]-L-cysteine + N(6)-ubiquitinyl-[acceptor protein]-L-lysine.. E3 ubiquitin-protein ligase that promotes the ubiquitination and proteasomal degradation of KRP1 and KRP2. In Arabidopsis thaliana (Mouse-ear cress), this protein is E3 ubiquitin-protein ligase RKP (RKP).